Consider the following 499-residue polypeptide: Maturase K (499 aa).

The protein belongs to the intron maturase 2 family. MatK subfamily.

The protein localises to the plastid. It localises to the chloroplast. Functionally, usually encoded in the trnK tRNA gene intron. Probably assists in splicing its own and other chloroplast group II introns. The polypeptide is Maturase K (Chamaecrista fasciculata (Showy partridge pea)).